We begin with the raw amino-acid sequence, 277 residues long: Large ribosomal subunit protein uL2 (277 aa).

The disordered stretch occupies residues 199–277 (DHGNINDGKA…ILRSRHQRKS (79 aa)).

This sequence belongs to the universal ribosomal protein uL2 family. Part of the 50S ribosomal subunit. Forms a bridge to the 30S subunit in the 70S ribosome.

Functionally, one of the primary rRNA binding proteins. Required for association of the 30S and 50S subunits to form the 70S ribosome, for tRNA binding and peptide bond formation. It has been suggested to have peptidyltransferase activity; this is somewhat controversial. Makes several contacts with the 16S rRNA in the 70S ribosome. This is Large ribosomal subunit protein uL2 from Mesorhizobium japonicum (strain LMG 29417 / CECT 9101 / MAFF 303099) (Mesorhizobium loti (strain MAFF 303099)).